The primary structure comprises 76 residues: Small ribosomal subunit protein bS18 (76 aa).

This sequence belongs to the bacterial ribosomal protein bS18 family. As to quaternary structure, part of the 30S ribosomal subunit. Forms a tight heterodimer with protein bS6.

Its function is as follows. Binds as a heterodimer with protein bS6 to the central domain of the 16S rRNA, where it helps stabilize the platform of the 30S subunit. The sequence is that of Small ribosomal subunit protein bS18 from Tolumonas auensis (strain DSM 9187 / NBRC 110442 / TA 4).